The following is a 96-amino-acid chain: (4S)-4-hydroxy-5-phosphonooxypentane-2,3-dione isomerase (96 aa).

Positions 2-91 (HVTLVEINVH…MTGPRKKRLF (90 aa)) constitute an ABM domain.

This sequence belongs to the LsrG family. Homodimer.

It localises to the cytoplasm. The catalysed reaction is (2S)-2-hydroxy-3,4-dioxopentyl phosphate = 3-hydroxy-2,4-dioxopentyl phosphate. Involved in the degradation of phospho-AI-2, thereby terminating induction of the lsr operon and closing the AI-2 signaling cycle. Catalyzes the conversion of (4S)-4-hydroxy-5-phosphonooxypentane-2,3-dione (P-DPD) to 3-hydroxy-5-phosphonooxypentane-2,4-dione (P-HPD). The sequence is that of (4S)-4-hydroxy-5-phosphonooxypentane-2,3-dione isomerase from Shigella flexneri serotype 5b (strain 8401).